Here is a 325-residue protein sequence, read N- to C-terminus: Lipid droplet-associated hydrolase (325 aa).

The active-site Nucleophile is Ser139. Active-site charge relay system residues include Asp271 and His300.

Belongs to the AB hydrolase superfamily. LDAH family.

The protein resides in the lipid droplet. Its subcellular location is the endoplasmic reticulum. It catalyses the reaction a cholesterol ester + H2O = cholesterol + a fatty acid + H(+). Probable serine lipid hydrolase associated with lipid droplets. Has low cholesterol esterase activity. Appears to lack triglyceride lipase activity. Involved in cholesterol and triglyceride homeostasis; stimulates cellular triglyceride accumulation and cellular cholesterol release. Acts antagonistically with PNPLA2/ATGL in regulation of cellular lipid stores. May regulate triglyceride accumulation indirectly through stimulation of PNPLA2/ATGL ubiquitination and proteasomal degradation. Promotes microtubule-dependent lipid droplet fusion. Highly expressed in macrophage-rich areas in atherosclerotic lesions, suggesting that it could promote cholesterol ester turnover in macrophages. The chain is Lipid droplet-associated hydrolase from Rattus norvegicus (Rat).